The primary structure comprises 209 residues: MKNLVVVDHPLIKHKLTIMRDKNTGPKEFRELLKEITLLLAYEATRHLKCEEVEVETPITKTTGYRINDKDIVVVPILRAGLVMADGILELLPNASVGHIGIYRDPETLRAVEYYAKLPPLDGDKEVFLLDPMLATGVSSVKALDILKENGARKITLVALIAAPEGVEAVEEKHSDVKIYVAALDERLNDHGYIIPGLGDAGDRLFRTK.

5-phospho-alpha-D-ribose 1-diphosphate contacts are provided by residues Arg79, Arg104, and Asp131 to Ser139. Uracil is bound by residues Ile194 and Gly199 to Ala201. 5-phospho-alpha-D-ribose 1-diphosphate is bound at residue Asp200.

This sequence belongs to the UPRTase family. Mg(2+) serves as cofactor.

The catalysed reaction is UMP + diphosphate = 5-phospho-alpha-D-ribose 1-diphosphate + uracil. It participates in pyrimidine metabolism; UMP biosynthesis via salvage pathway; UMP from uracil: step 1/1. Allosterically activated by GTP. In terms of biological role, catalyzes the conversion of uracil and 5-phospho-alpha-D-ribose 1-diphosphate (PRPP) to UMP and diphosphate. The sequence is that of Uracil phosphoribosyltransferase from Thermotoga neapolitana (strain ATCC 49049 / DSM 4359 / NBRC 107923 / NS-E).